The sequence spans 176 residues: Shikimate kinase (176 aa).

An ATP-binding site is contributed by 12–17 (GSGKST). Ser-16 is a binding site for Mg(2+). The substrate site is built by Asp-34, Arg-58, and Gly-80. Arg-117 is an ATP binding site. Residue Arg-136 participates in substrate binding. Arg-153 provides a ligand contact to ATP.

It belongs to the shikimate kinase family. In terms of assembly, monomer. Requires Mg(2+) as cofactor.

The protein resides in the cytoplasm. It carries out the reaction shikimate + ATP = 3-phosphoshikimate + ADP + H(+). It functions in the pathway metabolic intermediate biosynthesis; chorismate biosynthesis; chorismate from D-erythrose 4-phosphate and phosphoenolpyruvate: step 5/7. Functionally, catalyzes the specific phosphorylation of the 3-hydroxyl group of shikimic acid using ATP as a cosubstrate. The polypeptide is Shikimate kinase (Mycobacterium avium (strain 104)).